The chain runs to 225 residues: MSCESSMVLGYWDIRGLAHAIRLLLEFTDTSYEEKRYTCGEAPDYDRSQWLDVKFKLDLDFPNLPYLMDGKNKITQSNAILRYIARKHNMCGETEEEKIRVDIIENQVMDFRTQLIRLCYSSDHEKLKPQYLEELPGQLKQFSVFLGKFSWFAGEKLTFVDFLTYDILDQNRIFEPKCLDEFPNLKAFMCRFEALEKIAAYIQSDQFFKMPINNKMAQWGNKPVC.

The GST N-terminal domain occupies 5-92; that stretch reads SSMVLGYWDI…YIARKHNMCG (88 aa). Glutathione contacts are provided by residues 11 to 12, 50 to 54, and 63 to 64; these read YW, WLDVK, and NL. K54 participates in a covalent cross-link: Glycyl lysine isopeptide (Lys-Gly) (interchain with G-Cter in SUMO2). A Glycyl lysine isopeptide (Lys-Gly) (interchain with G-Cter in SUMO2) cross-link involves residue K73. 76 to 77 provides a ligand contact to glutathione; it reads QS. Positions 94-212 constitute a GST C-terminal domain; it reads TEEEKIRVDI…QSDQFFKMPI (119 aa). Y120 contributes to the substrate binding site.

This sequence belongs to the GST superfamily. Mu family. As to quaternary structure, homodimer.

The protein localises to the cytoplasm. The enzyme catalyses RX + glutathione = an S-substituted glutathione + a halide anion + H(+). Conjugation of reduced glutathione to a wide number of exogenous and endogenous hydrophobic electrophiles. May govern uptake and detoxification of both endogenous compounds and xenobiotics at the testis and brain blood barriers. This is Glutathione S-transferase Mu 3 (GSTM3) from Macaca fuscata fuscata (Japanese macaque).